The chain runs to 21 residues: Conchiolin protein p20 (21 aa).

Residues 1–14 are compositionally biased toward low complexity; the sequence is YQRXSRYYYYXGPP. Residues 1-21 form a disordered region; it reads YQRXSRYYYYXGPPDDIDDRY.

The protein belongs to the N16 matrix protein family. Homooligomer; disulfide-linked. May also be disulfide-linked to insoluble organic matrix. Post-translationally, according to PubMed:11250534, amino acids 4 and 11 may be sulfated or phosphorylated. By similarity with the N14 matrix protein, amino-acid 4 may be a cysteine involved in a disulfide bond. As to expression, component of conchiolin, the organic matrix of nacre. Is dispersed in calcium carbonate and also linked by disulfide bonds to the organic core of nacre.

Its subcellular location is the secreted. It is found in the extracellular space. It localises to the extracellular matrix. Functionally, may be specifically involved in the formation of the nacreous layer. In Pinctada maxima (Silver-lipped pearl oyster), this protein is Conchiolin protein p20.